The sequence spans 84 residues: Large ribosomal subunit protein bL27 (84 aa).

The segment at 1-22 (MAHKKAGGSTRNGRDSESKRLG) is disordered.

This sequence belongs to the bacterial ribosomal protein bL27 family.

The protein is Large ribosomal subunit protein bL27 of Shewanella woodyi (strain ATCC 51908 / MS32).